An 82-amino-acid chain; its full sequence is Acyl carrier protein (82 aa).

Residues 4 to 79 (PEMEERLRKI…DALNYLETHQ (76 aa)) enclose the Carrier domain. Ser39 bears the O-(pantetheine 4'-phosphoryl)serine mark.

It belongs to the acyl carrier protein (ACP) family. Post-translationally, 4'-phosphopantetheine is transferred from CoA to a specific serine of apo-ACP by AcpS. This modification is essential for activity because fatty acids are bound in thioester linkage to the sulfhydryl of the prosthetic group.

It is found in the cytoplasm. The protein operates within lipid metabolism; fatty acid biosynthesis. Functionally, carrier of the growing fatty acid chain in fatty acid biosynthesis. This chain is Acyl carrier protein, found in Chloroflexus aurantiacus (strain ATCC 29366 / DSM 635 / J-10-fl).